A 115-amino-acid polypeptide reads, in one-letter code: Large ribosomal subunit protein bL19 (115 aa).

It belongs to the bacterial ribosomal protein bL19 family.

Its function is as follows. This protein is located at the 30S-50S ribosomal subunit interface and may play a role in the structure and function of the aminoacyl-tRNA binding site. The protein is Large ribosomal subunit protein bL19 of Edwardsiella ictaluri (strain 93-146).